We begin with the raw amino-acid sequence, 479 residues long: tRNA-2-methylthio-N(6)-dimethylallyladenosine synthase (479 aa).

The MTTase N-terminal domain occupies 3–120 (KKLYIKTWGC…LPEMVNQVSE (118 aa)). Residues C12, C49, C83, C157, C161, and C164 each contribute to the [4Fe-4S] cluster site. Residues 143–375 (KADGASAFVS…QQRLNQQSMA (233 aa)) form the Radical SAM core domain. The 64-residue stretch at 378–441 (RRMLETEQRI…PNSLRGELIR (64 aa)) folds into the TRAM domain.

Belongs to the methylthiotransferase family. MiaB subfamily. Monomer. It depends on [4Fe-4S] cluster as a cofactor.

The protein localises to the cytoplasm. The catalysed reaction is N(6)-dimethylallyladenosine(37) in tRNA + (sulfur carrier)-SH + AH2 + 2 S-adenosyl-L-methionine = 2-methylsulfanyl-N(6)-dimethylallyladenosine(37) in tRNA + (sulfur carrier)-H + 5'-deoxyadenosine + L-methionine + A + S-adenosyl-L-homocysteine + 2 H(+). Functionally, catalyzes the methylthiolation of N6-(dimethylallyl)adenosine (i(6)A), leading to the formation of 2-methylthio-N6-(dimethylallyl)adenosine (ms(2)i(6)A) at position 37 in tRNAs that read codons beginning with uridine. This Idiomarina loihiensis (strain ATCC BAA-735 / DSM 15497 / L2-TR) protein is tRNA-2-methylthio-N(6)-dimethylallyladenosine synthase.